The sequence spans 1106 residues: Carbamoyl phosphate synthase large chain (1106 aa).

A carboxyphosphate synthetic domain region spans residues 1–402 (MPRRQDLNSV…ALQKAMRSLE (402 aa)). ATP contacts are provided by R129, R169, G175, G176, E208, I210, E215, G241, V242, H243, Q285, and E299. The region spanning 133–328 (KGVVERCGAE…IAKIATKLSL (196 aa)) is the ATP-grasp 1 domain. Mg(2+) is bound by residues Q285, E299, and N301. Mn(2+) is bound by residues Q285, E299, and N301. An oligomerization domain region spans residues 403–550 (QKGSAFSFAR…YHYSSYDRET (148 aa)). The carbamoyl phosphate synthetic domain stretch occupies residues 551-953 (EVAPHEKPSV…AFAKAQAAAG (403 aa)). The region spanning 681–872 (ARVLTEAGLR…MAKAAALIGT (192 aa)) is the ATP-grasp 2 domain. ATP contacts are provided by R717, K756, L758, E763, G788, I789, H790, S791, Q831, and E843. 3 residues coordinate Mg(2+): Q831, E843, and N845. Mn(2+)-binding residues include Q831, E843, and N845. The 153-residue stretch at 954–1106 (GPLPTSGSLF…ERAAQEASRD (153 aa)) folds into the MGS-like domain. An allosteric domain region spans residues 954–1106 (GPLPTSGSLF…ERAAQEASRD (153 aa)).

It belongs to the CarB family. As to quaternary structure, composed of two chains; the small (or glutamine) chain promotes the hydrolysis of glutamine to ammonia, which is used by the large (or ammonia) chain to synthesize carbamoyl phosphate. Tetramer of heterodimers (alpha,beta)4. Mg(2+) serves as cofactor. It depends on Mn(2+) as a cofactor.

It carries out the reaction hydrogencarbonate + L-glutamine + 2 ATP + H2O = carbamoyl phosphate + L-glutamate + 2 ADP + phosphate + 2 H(+). The catalysed reaction is hydrogencarbonate + NH4(+) + 2 ATP = carbamoyl phosphate + 2 ADP + phosphate + 2 H(+). It functions in the pathway amino-acid biosynthesis; L-arginine biosynthesis; carbamoyl phosphate from bicarbonate: step 1/1. The protein operates within pyrimidine metabolism; UMP biosynthesis via de novo pathway; (S)-dihydroorotate from bicarbonate: step 1/3. Large subunit of the glutamine-dependent carbamoyl phosphate synthetase (CPSase). CPSase catalyzes the formation of carbamoyl phosphate from the ammonia moiety of glutamine, carbonate, and phosphate donated by ATP, constituting the first step of 2 biosynthetic pathways, one leading to arginine and/or urea and the other to pyrimidine nucleotides. The large subunit (synthetase) binds the substrates ammonia (free or transferred from glutamine from the small subunit), hydrogencarbonate and ATP and carries out an ATP-coupled ligase reaction, activating hydrogencarbonate by forming carboxy phosphate which reacts with ammonia to form carbamoyl phosphate. The protein is Carbamoyl phosphate synthase large chain of Kocuria rhizophila (strain ATCC 9341 / DSM 348 / NBRC 103217 / DC2201).